Here is a 694-residue protein sequence, read N- to C-terminus: Cyclic nucleotide-gated channel beta-3 (694 aa).

Over 1 to 210 (MLKSLTVKFN…SIDSYTDRVY (210 aa)) the chain is Cytoplasmic. 2 disordered regions span residues 24-82 (CPNL…DPEC) and 146-177 (ENFP…KEHQ). Composition is skewed to polar residues over residues 26–40 (NLSS…QGDN) and 153–168 (ASSQ…PKQE). Residues 211 to 234 (LLWLLLVTIAYNWNCWLLPVRLVF) traverse the membrane as a helical segment. Residues 235–241 (PCQTPDN) lie on the Extracellular side of the membrane. The helical transmembrane segment at 242 to 262 (KNYWIITDIVCDIIYLCDILL) threads the bilayer. At 263–291 (IQPRLQFVRGGEIIVDSNELKRNYRSSTK) the chain is on the cytoplasmic side. Residues 292–309 (FRMDVASLLPFEVLYIFF) form a helical membrane-spanning segment. Topologically, residues 310–312 (GVN) are extracellular. Residues 313 to 327 (PIFRANRILKYTSFF) traverse the membrane as a helical segment. At 328–340 (EFNHHLESIMDKA) the chain is on the cytoplasmic side. Residues 340–439 (AYVYRVIRTT…IGQMRDVIGA (100 aa)) form an ion conduction pathway region. The chain crosses the membrane as a helical span at residues 341 to 363 (YVYRVIRTTGYLLFLLHINACVY). Residues 364 to 385 (YWASDYEGIGSTKWVYNGEGNK) are Extracellular-facing. 2 helical membrane-spanning segments follow: residues 386 to 412 (YLRC…SFEI) and 413 to 437 (VFQF…RDVI). The selectivity filter stretch occupies residues 399–402 (TIGG). The Cytoplasmic segment spans residues 438–694 (GAATANQNYF…KGKRKTTTQK (257 aa)). A C-linker region spans residues 442-518 (ANQNYFQACM…SIIDKVELFK (77 aa)). Residues 522 to 638 (TQMIYDLLLR…LLMKKAKILL (117 aa)) are cyclic nucleotide-binding domain. 4 residues coordinate 3',5'-cyclic GMP: G583, E584, R596, and T597.

This sequence belongs to the cyclic nucleotide-gated cation channel (TC 1.A.1.5) family. CNGB3 subfamily. As to quaternary structure, forms heterotetrameric channels composed of CNGA3 and CNGB3 subunits with 3:1 stoichiometry. As to expression, small subset of retinal photoreceptor cells and testis.

It localises to the cell membrane. It catalyses the reaction Ca(2+)(in) = Ca(2+)(out). The enzyme catalyses Na(+)(in) = Na(+)(out). The catalysed reaction is K(+)(in) = K(+)(out). It carries out the reaction NH4(+)(in) = NH4(+)(out). It catalyses the reaction Rb(+)(in) = Rb(+)(out). The enzyme catalyses Li(+)(in) = Li(+)(out). The catalysed reaction is Cs(+)(in) = Cs(+)(out). Its function is as follows. Pore-forming subunit of the cone cyclic nucleotide-gated channel. Mediates cone photoresponses at bright light converting transient changes in intracellular cGMP levels into electrical signals. In the dark, cGMP levels are high and keep the channel open enabling a steady inward current carried by Na(+) and Ca(2+) ions that leads to membrane depolarization and neurotransmitter release from synaptic terminals. Upon photon absorption cGMP levels decline leading to channel closure and membrane hyperpolarization that ultimately slows neurotransmitter release and signals the presence of light, the end point of the phototransduction cascade. Conducts cGMP- and cAMP-gated ion currents, with permeability for monovalent and divalent cations. This Mus musculus (Mouse) protein is Cyclic nucleotide-gated channel beta-3.